A 238-amino-acid chain; its full sequence is Probable transcriptional regulatory protein M6_Spy0297 (238 aa).

Belongs to the TACO1 family. YeeN subfamily.

It is found in the cytoplasm. This chain is Probable transcriptional regulatory protein M6_Spy0297, found in Streptococcus pyogenes serotype M6 (strain ATCC BAA-946 / MGAS10394).